A 114-amino-acid chain; its full sequence is Hydrogenase maturation factor HypA (114 aa).

Histidine 2 serves as a coordination point for Ni(2+). Residues cysteine 73, cysteine 76, cysteine 89, and cysteine 92 each contribute to the Zn(2+) site.

It belongs to the HypA/HybF family.

Its function is as follows. Involved in the maturation of [NiFe] hydrogenases. Required for nickel insertion into the metal center of the hydrogenase. This is Hydrogenase maturation factor HypA from Desulfitobacterium hafniense (strain DSM 10664 / DCB-2).